We begin with the raw amino-acid sequence, 285 residues long: Glutamate racemase (285 aa).

Residues 28–29 (DS) and 60–61 (YG) each bind substrate. Cysteine 92 functions as the Proton donor/acceptor in the catalytic mechanism. 93–94 (NT) contributes to the substrate binding site. Cysteine 204 functions as the Proton donor/acceptor in the catalytic mechanism. Position 205-206 (205-206 (TH)) interacts with substrate.

The protein belongs to the aspartate/glutamate racemases family.

It catalyses the reaction L-glutamate = D-glutamate. Its pathway is cell wall biogenesis; peptidoglycan biosynthesis. Its function is as follows. Provides the (R)-glutamate required for cell wall biosynthesis. This Escherichia coli O7:K1 (strain IAI39 / ExPEC) protein is Glutamate racemase.